Consider the following 121-residue polypeptide: Small ribosomal subunit protein uS13 (121 aa).

Residues 92–121 (RKGLPVRGQSSKTNARTVKGPRKTVANKKK) are disordered. Basic residues predominate over residues 110–121 (KGPRKTVANKKK).

This sequence belongs to the universal ribosomal protein uS13 family. Part of the 30S ribosomal subunit. Forms a loose heterodimer with protein S19. Forms two bridges to the 50S subunit in the 70S ribosome.

Functionally, located at the top of the head of the 30S subunit, it contacts several helices of the 16S rRNA. In the 70S ribosome it contacts the 23S rRNA (bridge B1a) and protein L5 of the 50S subunit (bridge B1b), connecting the 2 subunits; these bridges are implicated in subunit movement. Contacts the tRNAs in the A and P-sites. In Mycoplasma capricolum subsp. capricolum (strain California kid / ATCC 27343 / NCTC 10154), this protein is Small ribosomal subunit protein uS13.